The chain runs to 278 residues: Pantothenate synthetase (278 aa).

Methionine 27–histidine 34 provides a ligand contact to ATP. The active-site Proton donor is the histidine 34. Residue glutamine 58 coordinates (R)-pantoate. Beta-alanine is bound at residue glutamine 58. Residue glycine 144–aspartate 147 participates in ATP binding. Glutamine 150 is a binding site for (R)-pantoate. ATP is bound by residues valine 173 and methionine 181–arginine 184.

This sequence belongs to the pantothenate synthetase family. As to quaternary structure, homodimer.

It is found in the cytoplasm. The catalysed reaction is (R)-pantoate + beta-alanine + ATP = (R)-pantothenate + AMP + diphosphate + H(+). The protein operates within cofactor biosynthesis; (R)-pantothenate biosynthesis; (R)-pantothenate from (R)-pantoate and beta-alanine: step 1/1. In terms of biological role, catalyzes the condensation of pantoate with beta-alanine in an ATP-dependent reaction via a pantoyl-adenylate intermediate. This is Pantothenate synthetase from Roseiflexus castenholzii (strain DSM 13941 / HLO8).